A 351-amino-acid polypeptide reads, in one-letter code: Actin maturation protease (351 aa).

A compositionally biased stretch (pro residues) spans 1-19 (MTSPCSPPLKPPISPPKTP). Residues 1-70 (MTSPCSPPLK…PPAATGPAPR (70 aa)) form a disordered region. The segment covering 36–50 (LDFSALPSPPWSQQT) has biased composition (low complexity). A compositionally biased stretch (pro residues) spans 51–64 (PVPPPLPLPPPPAA). Residues 124–244 (SLIQEGPQCG…WAVSAGVLLG (121 aa)) are peptidase C39-like. C132 is a catalytic residue. A Phosphoserine modification is found at S316.

The protein belongs to the ACTMAP family. Interacts (via N-terminus) with PFN2 isoforms IIa and IIb; the interactions may facilitate efficient cleavage of the acetylated N-terminus of immature actin. Interacts with PFN1.

The protein resides in the cytoplasm. The catalysed reaction is N-terminal N(alpha)-acetyl-L-methionyl-L-aspartyl-[protein] + H2O = N-terminal L-aspartyl-[protein] + N-acetyl-L-methionine. It carries out the reaction N-terminal N(alpha)-acetyl-L-methionyl-L-glutamyl-[protein] + H2O = N-terminal L-glutamyl-[protein] + N-acetyl-L-methionine. The enzyme catalyses N-terminal N(alpha)-acetyl-L-cysteinyl-L-aspartyl-[protein] + H2O = N-terminal L-aspartyl-[protein] + N-acetyl-L-cysteine. It catalyses the reaction N-terminal N(alpha)-acetyl-L-cysteinyl-L-glutamyl-[protein] + H2O = N-terminal L-glutamyl-[protein] + N-acetyl-L-cysteine. Actin maturation protease that specifically mediates the cleavage of immature acetylated N-terminal actin, thereby contributing to actin maturation. Cleaves N-terminal acetylated methionine of immature cytoplasmic beta- and gamma-actins ACTB and ACTG1 after translation. Cleaves N-terminal acetylated cysteine of muscle alpha-actins ACTA1, ACTC1 and ACTA2 after canonical removal of N-terminal methionine. The polypeptide is Actin maturation protease (Homo sapiens (Human)).